The chain runs to 247 residues: Ribosomal RNA small subunit methyltransferase G (247 aa).

S-adenosyl-L-methionine-binding positions include Gly84, Phe89, 136 to 137 (AE), and Arg155.

It belongs to the methyltransferase superfamily. RNA methyltransferase RsmG family.

It is found in the cytoplasm. In terms of biological role, specifically methylates the N7 position of a guanine in 16S rRNA. This chain is Ribosomal RNA small subunit methyltransferase G, found in Prochlorococcus marinus (strain MIT 9313).